A 144-amino-acid chain; its full sequence is Bacilliredoxin BLi02323/BL05224 (144 aa).

This sequence belongs to the bacilliredoxin family.

This Bacillus licheniformis (strain ATCC 14580 / DSM 13 / JCM 2505 / CCUG 7422 / NBRC 12200 / NCIMB 9375 / NCTC 10341 / NRRL NRS-1264 / Gibson 46) protein is Bacilliredoxin BLi02323/BL05224.